The chain runs to 135 residues: C-type lectin PAL (135 aa).

Cystine bridges form between Cys3-Cys14, Cys31-Cys131, Cys38-Cys133, and Cys106-Cys123. The 123-residue stretch at 10–132 folds into the C-type lectin domain; it reads MNGLCYKIFD…CGSKNAFLCQ (123 aa). Ca(2+) contacts are provided by Gln96, Asp98, Glu104, Asn119, and Asp120. A Galactose-binding motif is present at residues 96 to 98; sequence QPD.

This sequence belongs to the true venom lectin family. In terms of assembly, homodimer; disulfide-linked. Expressed by the venom gland.

The protein resides in the secreted. Functionally, galactose-binding lectin which recognizes specific carbohydrate structures and agglutinates a variety of animal cells by binding to cell-surface glycoproteins and glycolipids. This is a calcium-dependent lectin. Shows high hemagglutinating activity (MHC is 0.25 ug/ml on rabbit erythrocytes). The sequence is that of C-type lectin PAL from Bitis arietans (African puff adder).